Here is a 609-residue protein sequence, read N- to C-terminus: Sodium- and chloride-dependent GABA transporter 2 (609 aa).

A compositionally biased stretch (polar residues) spans 1 to 13 (MDSRASGTASNGE). Residues 1–23 (MDSRASGTASNGETKPVYPVMEK) are disordered. Topologically, residues 1–40 (MDSRASGTASNGETKPVYPVMEKEEEEGTLERGHWNNKME) are cytoplasmic. Transmembrane regions (helical) follow at residues 41–61 (FVLS…FPYL), 68–88 (GAFF…VFLL), and 121–141 (IVIL…FYLF). Residues 142–206 (SSFTIDLPWG…GIQHLGALRW (65 aa)) are Extracellular-facing. Cysteines 153 and 162 form a disulfide. N-linked (GlcNAc...) asparagine glycosylation is found at N169 and N173. The next 2 membrane-spanning stretches (helical) occupy residues 207–227 (ELAL…WKGV) and 233–253 (VVYF…IRGV). Residue N269 is glycosylated (N-linked (GlcNAc...) asparagine). Helical transmembrane passes span 282–302 (AGTQ…ALGS), 319–339 (FLNS…LGFM), 366–386 (VVML…VVLL), 418–438 (VLIL…LTEG), 453–473 (GMCL…VYGA), 490–510 (PLIK…TFLF), and 528–548 (WWGD…IPAW). Over 549–609 (SLYRLGTLKG…LRLTELESHC (61 aa)) the chain is Cytoplasmic. T594 is modified (phosphothreonine). S598 is modified (phosphoserine).

The protein belongs to the sodium:neurotransmitter symporter (SNF) (TC 2.A.22) family. SLC6A13 subfamily.

It is found in the cell membrane. Its subcellular location is the basolateral cell membrane. It catalyses the reaction 4-aminobutanoate(out) + chloride(out) + 2 Na(+)(out) = 4-aminobutanoate(in) + chloride(in) + 2 Na(+)(in). It carries out the reaction taurine(out) + chloride(out) + 2 Na(+)(out) = taurine(in) + chloride(in) + 2 Na(+)(in). The catalysed reaction is beta-alanine(out) + chloride(out) + 2 Na(+)(out) = beta-alanine(in) + chloride(in) + 2 Na(+)(in). The enzyme catalyses hypotaurine(out) + chloride(out) + 2 Na(+)(out) = hypotaurine(in) + chloride(in) + 2 Na(+)(in). Mediates sodium- and chloride-dependent transport of gamma-aminobutyric acid (GABA). Can also mediate transport of beta-alanine, taurine and hypotaurine. This is Sodium- and chloride-dependent GABA transporter 2 (SLC6A13) from Macaca fascicularis (Crab-eating macaque).